Reading from the N-terminus, the 356-residue chain is Protein-L-isoaspartate O-methyltransferase domain-containing protein 1 (356 aa).

The N-myristoyl glycine moiety is linked to residue Gly2. The active site involves Ser64. AdoMet binding motif regions lie at residues 85–94, 160–164, and 181–191; these read LNLGSGTGYL, YDRIY, and LKVGGILVMPI. The interval 240–250 is BC-box; that stretch reads VRNLQDLARIY. Residues 299 to 331 are disordered; the sequence is PLDSEEDEKMEEDKEEEEKEPGEALKPEEPPQN. The segment covering 301–318 has biased composition (acidic residues); sequence DSEEDEKMEEDKEEEEKE. The span at 319–331 shows a compositional bias: basic and acidic residues; sequence PGEALKPEEPPQN. Residues 340-343 are CUL-box; sequence LPLP.

Belongs to the methyltransferase superfamily. L-isoaspartyl/D-aspartyl protein methyltransferase family. Component of the probable ECS(PCMTD1) E3 ubiquitin-protein ligase complex, at least composed of CUL5, ELOB, ELOC, RBX2 and PCMTD1. Interacts (via the BC-box) with ELOB and ELOC; the interaction is direct and stabilizes PCMTD1.

It is found in the cytoplasm. It localises to the membrane. Functionally, substrate recognition component of an ECS (Elongin BC-CUL5-SOCS-box protein) E3 ubiquitin ligase complex which mediates the ubiquitination and subsequent proteasomal degradation of target proteins. Specifically binds to the methyltransferase cofactor S-adenosylmethionine (AdoMet) via the N-terminal AdoMet binding motif, but does not display methyltransferase activity. May provide an alternate maintenance pathway for modified proteins by acting as a damage-specific E3 ubiquitin ligase adaptor protein. This chain is Protein-L-isoaspartate O-methyltransferase domain-containing protein 1 (PCMTD1), found in Bos taurus (Bovine).